The chain runs to 215 residues: tRNA (guanine-N(7)-)-methyltransferase (215 aa).

Glu-44, Glu-69, Asp-96, and Asp-118 together coordinate S-adenosyl-L-methionine. Residue Asp-118 is part of the active site. Residue Lys-122 coordinates substrate. The segment at 124 to 129 (RHEKRR) is interaction with RNA. Substrate contacts are provided by residues Asp-154 and 192-195 (TEYE).

This sequence belongs to the class I-like SAM-binding methyltransferase superfamily. TrmB family.

The enzyme catalyses guanosine(46) in tRNA + S-adenosyl-L-methionine = N(7)-methylguanosine(46) in tRNA + S-adenosyl-L-homocysteine. The protein operates within tRNA modification; N(7)-methylguanine-tRNA biosynthesis. Functionally, catalyzes the formation of N(7)-methylguanine at position 46 (m7G46) in tRNA. The sequence is that of tRNA (guanine-N(7)-)-methyltransferase from Limosilactobacillus fermentum (strain NBRC 3956 / LMG 18251) (Lactobacillus fermentum).